The chain runs to 80 residues: Exodeoxyribonuclease 7 small subunit (80 aa).

The protein belongs to the XseB family. Heterooligomer composed of large and small subunits.

The protein resides in the cytoplasm. The enzyme catalyses Exonucleolytic cleavage in either 5'- to 3'- or 3'- to 5'-direction to yield nucleoside 5'-phosphates.. Functionally, bidirectionally degrades single-stranded DNA into large acid-insoluble oligonucleotides, which are then degraded further into small acid-soluble oligonucleotides. The polypeptide is Exodeoxyribonuclease 7 small subunit (Vibrio vulnificus (strain CMCP6)).